The chain runs to 327 residues: Zinc transport protein ZntB (327 aa).

The Cytoplasmic segment spans residues 1 to 273 (MEAIKGSEVN…ARRTYTMSLM (273 aa)). A helical transmembrane segment spans residues 274 to 294 (AMVFLPSTFLTGLFGVNLGGI). Residues 295 to 300 (PGGAWH) lie on the Periplasmic side of the membrane. Residues 301–321 (FGFSMFCILLVVLIGGVTLWL) form a helical membrane-spanning segment. Over 322–327 (HRSKWL) the chain is Cytoplasmic.

It belongs to the CorA metal ion transporter (MIT) (TC 1.A.35) family.

The protein localises to the cell inner membrane. The enzyme catalyses Zn(2+)(out) + H(+)(out) = Zn(2+)(in) + H(+)(in). Zinc transporter. Acts as a Zn(2+):proton symporter, which likely mediates zinc ion uptake. The sequence is that of Zinc transport protein ZntB from Citrobacter koseri (strain ATCC BAA-895 / CDC 4225-83 / SGSC4696).